The primary structure comprises 322 residues: GATA transcription factor 8 (322 aa).

The segment at 93-168 (TLVEKKEDSF…DKDRVKDNVC (76 aa)) is disordered. Positions 102-141 (FSTNTDSSSSHSQFRSSSPVSVLESSSSSSQTTNTTSLVL) are enriched in low complexity. Residues 144 to 154 (KHGRPRTKRPR) show a composition bias toward basic residues. A Nuclear localization signal motif is present at residues 147 to 154 (RPRTKRPR). The segment at 225 to 279 (QYPLRKCMHCEVTKTPQWRLGPMGPKTLCNACGVRYKSGRLFPEYRPAASPTFTP) adopts a GATA-type zinc-finger fold.

The protein belongs to the type IV zinc-finger family. Class A subfamily.

Its subcellular location is the nucleus. Functionally, transcriptional activator that specifically binds 5'-GATA-3' or 5'-GAT-3' motifs within gene promoters. May be involved in the regulation of some light-responsive genes. In Arabidopsis thaliana (Mouse-ear cress), this protein is GATA transcription factor 8 (GATA8).